A 379-amino-acid polypeptide reads, in one-letter code: Cytochrome b (379 aa).

Transmembrane regions (helical) follow at residues 33–53, 77–98, 113–133, and 178–198; these read FGSL…FLAM, WTIR…FIHV, WNIG…GYVL, and FFAL…IHLL. Histidine 83 and histidine 97 together coordinate heme b. Heme b-binding residues include histidine 182 and histidine 196. Residue histidine 201 coordinates a ubiquinone. The next 4 helical transmembrane spans lie at 226–246, 288–308, 320–340, and 347–367; these read TKDF…TLFY, PGGV…PFLQ, LSQF…WIGG, and FISI…FIMP.

The protein belongs to the cytochrome b family. In terms of assembly, the cytochrome bc1 complex contains 11 subunits: 3 respiratory subunits (MT-CYB, CYC1 and UQCRFS1), 2 core proteins (UQCRC1 and UQCRC2) and 6 low-molecular weight proteins (UQCRH/QCR6, UQCRB/QCR7, UQCRQ/QCR8, UQCR10/QCR9, UQCR11/QCR10 and a cleavage product of UQCRFS1). This cytochrome bc1 complex then forms a dimer. The cofactor is heme b.

The protein localises to the mitochondrion inner membrane. In terms of biological role, component of the ubiquinol-cytochrome c reductase complex (complex III or cytochrome b-c1 complex) that is part of the mitochondrial respiratory chain. The b-c1 complex mediates electron transfer from ubiquinol to cytochrome c. Contributes to the generation of a proton gradient across the mitochondrial membrane that is then used for ATP synthesis. The polypeptide is Cytochrome b (MT-CYB) (Lepilemur ruficaudatus (Red-tailed sportive lemur)).